Reading from the N-terminus, the 197-residue chain is Xanthine phosphoribosyltransferase (197 aa).

Residues Leu-20 and Asn-27 each contribute to the xanthine site. Residue 128–132 (ANGQA) participates in 5-phospho-alpha-D-ribose 1-diphosphate binding. Lys-156 is a binding site for xanthine.

Belongs to the purine/pyrimidine phosphoribosyltransferase family. Xpt subfamily. As to quaternary structure, homodimer.

It is found in the cytoplasm. It catalyses the reaction XMP + diphosphate = xanthine + 5-phospho-alpha-D-ribose 1-diphosphate. The protein operates within purine metabolism; XMP biosynthesis via salvage pathway; XMP from xanthine: step 1/1. Converts the preformed base xanthine, a product of nucleic acid breakdown, to xanthosine 5'-monophosphate (XMP), so it can be reused for RNA or DNA synthesis. This Bacillus cereus (strain ATCC 10987 / NRS 248) protein is Xanthine phosphoribosyltransferase.